Consider the following 736-residue polypeptide: Putative ATP-dependent RNA helicase CG14443 (736 aa).

Disordered stretches follow at residues 32–58 (TKSS…SSVL), 73–166 (GIEG…GERP), 183–237 (NSFK…NSWR), and 265–296 (SFTR…NTWK). Composition is skewed to low complexity over residues 34-58 (SSIW…SSVL) and 125-160 (SSES…SHGS). Residues 190–199 (TSRENKESRS) are compositionally biased toward basic and acidic residues. Residues 277-296 (LCYQDQSKNPSRPSNYNTWK) are compositionally biased toward polar residues. A Q motif motif is present at residues 330-358 (LSFERSGFNATILQQLEDQGYDGPTPIQA). Residues 361-534 (WSIAKEGKNI…NKFLGQYTAI (174 aa)) enclose the Helicase ATP-binding domain. An ATP-binding site is contributed by 374-381 (SGKGTGKT). The DEAD box motif lies at 482–485 (DNID). The Helicase C-terminal domain maps to 561 to 719 (KVERLMKELT…LLQLAEEKMF (159 aa)).

Belongs to the DEAD box helicase family.

The catalysed reaction is ATP + H2O = ADP + phosphate + H(+). Its function is as follows. Probable ATP-binding RNA helicase. The protein is Putative ATP-dependent RNA helicase CG14443 of Drosophila melanogaster (Fruit fly).